Here is a 466-residue protein sequence, read N- to C-terminus: Adenosylhomocysteinase (466 aa).

Threonine 57, aspartate 132, and glutamate 192 together coordinate substrate. 193–195 (TTT) serves as a coordination point for NAD(+). Positions 222 and 226 each coordinate substrate. NAD(+) contacts are provided by residues asparagine 227, 256 to 261 (GYGDVG), glutamate 279, asparagine 314, 335 to 337 (IGH), and asparagine 380.

This sequence belongs to the adenosylhomocysteinase family. NAD(+) is required as a cofactor.

Its subcellular location is the cytoplasm. It carries out the reaction S-adenosyl-L-homocysteine + H2O = L-homocysteine + adenosine. It participates in amino-acid biosynthesis; L-homocysteine biosynthesis; L-homocysteine from S-adenosyl-L-homocysteine: step 1/1. Its function is as follows. May play a key role in the regulation of the intracellular concentration of adenosylhomocysteine. This Brucella melitensis biotype 2 (strain ATCC 23457) protein is Adenosylhomocysteinase.